The sequence spans 222 residues: UPF0758 protein YicR (222 aa).

One can recognise an MPN domain in the interval 100 to 222 (PLLSPEMTRE…YVSFAERGWI (123 aa)). Positions 171, 173, and 184 each coordinate Zn(2+). The JAMM motif motif lies at 171–184 (HNHPSGCAEPSKAD).

It belongs to the UPF0758 family. YicR subfamily.

The chain is UPF0758 protein YicR from Escherichia coli O81 (strain ED1a).